The following is an 89-amino-acid chain: Probable monothiol glutaredoxin GrlA (89 aa).

One can recognise a Glutaredoxin domain in the interval 1 to 89; it reads MLYMKGTPKM…EPMLRDAVAA (89 aa). K5 contacts glutathione. C13 is a binding site for [2Fe-2S] cluster. Glutathione-binding positions include R42, F54, and 67 to 68; that span reads SD.

It belongs to the glutaredoxin family. Monothiol subfamily.

The sequence is that of Probable monothiol glutaredoxin GrlA (grlA) from Legionella pneumophila subsp. pneumophila (strain Philadelphia 1 / ATCC 33152 / DSM 7513).